Consider the following 241-residue polypeptide: DnaA regulatory inactivator Hda (241 aa).

It belongs to the DnaA family. HdA subfamily. As to quaternary structure, the active form seems to be an ADP-bound monomer. Forms the RIDA complex (regulatory inactivation of DnaA) of ATP-DnaA, ADP-Hda and the DNA-loaded beta sliding clamp (dnaN).

In terms of biological role, mediates the interaction of DNA replication initiator protein DnaA with DNA polymerase subunit beta sliding clamp (dnaN). Stimulates hydrolysis of ATP-DnaA to ADP-DnaA, rendering DnaA inactive for reinitiation, a process called regulatory inhibition of DnaA or RIDA. The chain is DnaA regulatory inactivator Hda from Salmonella arizonae (strain ATCC BAA-731 / CDC346-86 / RSK2980).